The following is a 510-amino-acid chain: NEDD8-activating enzyme E1 regulatory subunit (510 aa).

At A2 the chain carries N-acetylalanine. 2 positions are modified to N6-acetyllysine: K6 and K317. Residues 307-320 (DMIADSGKYIKLQN) form an interaction with UBA3 region.

Belongs to the ubiquitin-activating E1 family. ULA1 subfamily. As to quaternary structure, heterodimer of UBA3 and NAE1. The complex binds NEDD8 and UBE2M. Binds APP and TP53BP2. Ubiquitinated by TRIP12, leading to its degradation by the proteasome.

It localises to the cell membrane. It participates in protein modification; protein neddylation. Its activity is regulated as follows. Binding of TP53BP2 to the regulatory subunit NAE1 decreases neddylation activity. Regulatory subunit of the dimeric UBA3-NAE1 E1 enzyme. E1 activates NEDD8 by first adenylating its C-terminal glycine residue with ATP, thereafter linking this residue to the side chain of the catalytic cysteine, yielding a NEDD8-UBA3 thioester and free AMP. E1 finally transfers NEDD8 to the catalytic cysteine of UBE2M. Necessary for cell cycle progression through the S-M checkpoint. Overexpression of NAE1 causes apoptosis through deregulation of NEDD8 conjugation. The covalent attachment of NEDD8 to target proteins is known as 'neddylation' and the process is involved in the regulation of cell growth, viability and development. This chain is NEDD8-activating enzyme E1 regulatory subunit (NAE1), found in Macaca fascicularis (Crab-eating macaque).